We begin with the raw amino-acid sequence, 753 residues long: Metal regulatory transcription factor 1 (753 aa).

N-acetylglycine is present on G2. Residue S5 is modified to Phosphoserine. Positions 133 to 138 match the Nuclear localization signal motif; it reads KRKEVK. 6 consecutive C2H2-type zinc fingers follow at residues 140-164, 170-194, 200-224, 229-253, 259-283, and 289-313; these read YQCT…QKTH, FVCN…VRVH, FECD…QRLH, FNCE…IRTH, FRCD…VRTH, and FFCP…MKGH. A Phosphoserine modification is found at S305. 3 disordered regions span residues 308–328, 395–466, and 648–715; these read SHMK…QHNG, ESFN…ALLQ, and SRRK…LSAM. The segment covering 408 to 417 has biased composition (polar residues); it reads PPSTGNSASL. A compositionally biased stretch (pro residues) spans 655–666; that stretch reads SPPPPEPSPQAP. Residues 679–698 show a composition bias toward low complexity; the sequence is SSAPVPGSSSSTLPSSCEQS. The segment covering 700 to 712 has biased composition (polar residues); sequence QAETPSDPQTETL.

Its subcellular location is the nucleus. It is found in the cytoplasm. Its function is as follows. Zinc-dependent transcriptional regulator of cellular adaption to conditions of exposure to heavy metals. Binds to metal responsive elements (MRE) in promoters and activates the transcription of metallothionein genes like metallothionein-2/MT2A. Also regulates the expression of metalloproteases in response to intracellular zinc and functions as a catabolic regulator of cartilages. The protein is Metal regulatory transcription factor 1 (MTF1) of Homo sapiens (Human).